The following is a 130-amino-acid chain: Small ribosomal subunit protein uS8z/uS8w (130 aa).

Belongs to the universal ribosomal protein uS8 family.

It localises to the cytoplasm. The protein is Small ribosomal subunit protein uS8z/uS8w (RPS15AA) of Arabidopsis thaliana (Mouse-ear cress).